A 260-amino-acid polypeptide reads, in one-letter code: UPF0246 protein BURPS668_1321 (260 aa).

Belongs to the UPF0246 family.

This chain is UPF0246 protein BURPS668_1321, found in Burkholderia pseudomallei (strain 668).